Consider the following 340-residue polypeptide: Biotin synthase (340 aa).

Positions 56–283 (NAVQLSTLLS…KAVVRLSAGR (228 aa)) constitute a Radical SAM core domain. [4Fe-4S] cluster contacts are provided by Cys71, Cys75, and Cys78. Residues Cys115, Cys146, Cys206, and Arg278 each coordinate [2Fe-2S] cluster.

Belongs to the radical SAM superfamily. Biotin synthase family. As to quaternary structure, homodimer. Requires [4Fe-4S] cluster as cofactor. The cofactor is [2Fe-2S] cluster.

It catalyses the reaction (4R,5S)-dethiobiotin + (sulfur carrier)-SH + 2 reduced [2Fe-2S]-[ferredoxin] + 2 S-adenosyl-L-methionine = (sulfur carrier)-H + biotin + 2 5'-deoxyadenosine + 2 L-methionine + 2 oxidized [2Fe-2S]-[ferredoxin]. Its pathway is cofactor biosynthesis; biotin biosynthesis; biotin from 7,8-diaminononanoate: step 2/2. Functionally, catalyzes the conversion of dethiobiotin (DTB) to biotin by the insertion of a sulfur atom into dethiobiotin via a radical-based mechanism. The sequence is that of Biotin synthase from Burkholderia lata (strain ATCC 17760 / DSM 23089 / LMG 22485 / NCIMB 9086 / R18194 / 383).